We begin with the raw amino-acid sequence, 357 residues long: Palmitoyltransferase ZDHHC20-A (357 aa).

Topologically, residues 1-14 (MAPSHAVRCCQRGL) are cytoplasmic. The helical transmembrane segment at 15–35 (SWIPVIFINLVVCWSYYAYVV) threads the bilayer. The Lumenal portion of the chain corresponds to 36–50 (ELCIYTIPNVNEQVI). The helical transmembrane segment at 51–71 (YLVVFHAFFFMFMWSYWKTIS) threads the bilayer. Residues 72-166 (SKPTNPSKEF…NNCVGFSNYK (95 aa)) are Cytoplasmic-facing. Residues 123–173 (RYCDRCQLIKPDRCHHCSTCDKCVLKMDHHCPWVNNCVGFSNYKFFVLFLA) enclose the DHHC domain. The active-site S-palmitoyl cysteine intermediate is Cys153. A helical transmembrane segment spans residues 167–187 (FFVLFLAYSMLYCVYIAATVL). At 188–204 (QYFIKFWTNQLPDTHAK) the chain is on the lumenal side. Residues 205 to 228 (FHVLFLFFVAAMFFISILSLFSYH) traverse the membrane as a helical segment. Residues 229–357 (LWLVGKNRTT…PVCVTLENES (129 aa)) are Cytoplasmic-facing.

The protein belongs to the DHHC palmitoyltransferase family.

It localises to the golgi apparatus membrane. The protein resides in the cell membrane. Its subcellular location is the cytoplasm. It is found in the perinuclear region. The protein localises to the endoplasmic reticulum membrane. It localises to the endoplasmic reticulum-Golgi intermediate compartment membrane. It carries out the reaction L-cysteinyl-[protein] + hexadecanoyl-CoA = S-hexadecanoyl-L-cysteinyl-[protein] + CoA. It catalyses the reaction L-cysteinyl-[protein] + tetradecanoyl-CoA = S-tetradecanoyl-L-cysteinyl-[protein] + CoA. The catalysed reaction is L-cysteinyl-[protein] + octadecanoyl-CoA = S-octadecanoyl-L-cysteinyl-[protein] + CoA. Its function is as follows. Palmitoyltransferase that could catalyze the addition of palmitate onto various protein substrates. Catalyzes palmitoylation of Cys residues on protein substrates and has a preference for acyl-CoA with C16 fatty acid chains but may also utilize acyl-CoA with C14 and C18 fatty acid chains. This chain is Palmitoyltransferase ZDHHC20-A, found in Danio rerio (Zebrafish).